We begin with the raw amino-acid sequence, 229 residues long: Protein GLC8 (229 aa).

Disordered regions lie at residues 1 to 21 (MGGILKNPLALSPEQLAQQDP), 35 to 62 (TQKNAKLTSHKRNIPGLDNTKEEGEIIG), and 107 to 229 (QFQD…TKEP). Position 12 is a phosphoserine (serine 12). Residues 107–117 (QFQDIHIDEPK) are compositionally biased toward basic and acidic residues. Threonine 118 is modified (phosphothreonine; by PHO85). Residue serine 158 is modified to Phosphoserine. Residues 164-173 (FEIKENKQPD) show a composition bias toward basic and acidic residues. Residues 175-184 (ETNDENDEDS) show a composition bias toward acidic residues. The residue at position 184 (serine 184) is a Phosphoserine. Residues 185–196 (PEARHKKFEEMR) show a composition bias toward basic and acidic residues.

Post-translationally, phosphorylated by the cyclin-CDKs PCL6-PHO85 and PCL7-PHO85. Phosphorylation of Thr-118 inactivates GLC8.

Modulator of GLC7 type-1 protein phosphatase. The polypeptide is Protein GLC8 (GLC8) (Saccharomyces cerevisiae (strain ATCC 204508 / S288c) (Baker's yeast)).